Reading from the N-terminus, the 203-residue chain is MPAFDTPAMMLILWAVIGYGLGSIPFGLILTRAMGMGDLRQIGSGNIGTTNVLRTGNKGAAALTLLLDGGKGAVAVLLARAFAGEDAAQVAALAAFVGHCYPIWLGFKGGKGVATFLGLWLALAWPVGVACCLSWLAGAAVTRISSMGALVAAASSTFWLVLLDQGAGFVLGIVLTLMVFWRHRANIARLKARTEPKIGQKSA.

5 consecutive transmembrane segments (helical) span residues 10 to 30, 59 to 79, 87 to 107, 116 to 136, and 160 to 180; these read MLILWAVIGYGLGSIPFGLIL, GAAALTLLLDGGKGAVAVLLA, AAQVAALAAFVGHCYPIWLGF, FLGLWLALAWPVGVACCLSWL, and LVLLDQGAGFVLGIVLTLMVF.

The protein belongs to the PlsY family. As to quaternary structure, probably interacts with PlsX.

It localises to the cell inner membrane. The catalysed reaction is an acyl phosphate + sn-glycerol 3-phosphate = a 1-acyl-sn-glycero-3-phosphate + phosphate. The protein operates within lipid metabolism; phospholipid metabolism. Catalyzes the transfer of an acyl group from acyl-phosphate (acyl-PO(4)) to glycerol-3-phosphate (G3P) to form lysophosphatidic acid (LPA). This enzyme utilizes acyl-phosphate as fatty acyl donor, but not acyl-CoA or acyl-ACP. The polypeptide is Glycerol-3-phosphate acyltransferase (Ruegeria pomeroyi (strain ATCC 700808 / DSM 15171 / DSS-3) (Silicibacter pomeroyi)).